The sequence spans 278 residues: Small ribosomal subunit protein uS3 (278 aa).

A KH type-2 domain is found at 39 to 107; sequence LRKAISKKYV…KVQLNIVEIS (69 aa). A disordered region spans residues 255-278; the sequence is AEIPAEEKPKRVVKKAENITKEEE.

Belongs to the universal ribosomal protein uS3 family. In terms of assembly, part of the 30S ribosomal subunit. Forms a tight complex with proteins S10 and S14.

Functionally, binds the lower part of the 30S subunit head. Binds mRNA in the 70S ribosome, positioning it for translation. In Dehalococcoides mccartyi (strain CBDB1), this protein is Small ribosomal subunit protein uS3.